We begin with the raw amino-acid sequence, 237 residues long: Uridylate kinase (237 aa).

12–15 contacts ATP; it reads KLSG. Residues 20–25 are involved in allosteric activation by GTP; it reads GENGYG. Residue glycine 54 participates in UMP binding. Positions 55 and 59 each coordinate ATP. Residues aspartate 72 and 133-140 contribute to the UMP site; that span reads TGNPYFST. The ATP site is built by tyrosine 166 and aspartate 169.

Belongs to the UMP kinase family. Homohexamer.

It is found in the cytoplasm. The enzyme catalyses UMP + ATP = UDP + ADP. It participates in pyrimidine metabolism; CTP biosynthesis via de novo pathway; UDP from UMP (UMPK route): step 1/1. Its activity is regulated as follows. Allosterically activated by GTP. Inhibited by UTP. In terms of biological role, catalyzes the reversible phosphorylation of UMP to UDP. The sequence is that of Uridylate kinase from Clostridium tetani (strain Massachusetts / E88).